A 437-amino-acid chain; its full sequence is Adenylosuccinate synthetase (437 aa).

GTP is bound by residues 12-18 (GDEGKGK) and 40-42 (GHT). Catalysis depends on D13, which acts as the Proton acceptor. D13 and G40 together coordinate Mg(2+). Residues 13 to 16 (DEGK), 38 to 41 (NAGH), T128, R142, Q223, T238, and R302 each bind IMP. Residue H41 is the Proton donor of the active site. A substrate-binding site is contributed by 298 to 304 (TTTGRRR). GTP-binding positions include R304, 330–332 (KLD), and 412–414 (SLG).

The protein belongs to the adenylosuccinate synthetase family. Homodimer. It depends on Mg(2+) as a cofactor.

It localises to the cytoplasm. It carries out the reaction IMP + L-aspartate + GTP = N(6)-(1,2-dicarboxyethyl)-AMP + GDP + phosphate + 2 H(+). It functions in the pathway purine metabolism; AMP biosynthesis via de novo pathway; AMP from IMP: step 1/2. Its function is as follows. Plays an important role in the de novo pathway of purine nucleotide biosynthesis. Catalyzes the first committed step in the biosynthesis of AMP from IMP. The sequence is that of Adenylosuccinate synthetase from Prochlorococcus marinus (strain MIT 9211).